We begin with the raw amino-acid sequence, 135 residues long: ATP synthase epsilon chain (135 aa).

The protein belongs to the ATPase epsilon chain family. F-type ATPases have 2 components, CF(1) - the catalytic core - and CF(0) - the membrane proton channel. CF(1) has five subunits: alpha(3), beta(3), gamma(1), delta(1), epsilon(1). CF(0) has three main subunits: a, b and c.

It localises to the cell inner membrane. Functionally, produces ATP from ADP in the presence of a proton gradient across the membrane. In Bradyrhizobium sp. (strain ORS 278), this protein is ATP synthase epsilon chain.